Consider the following 434-residue polypeptide: Alpha-enolase (434 aa).

Residue Ser40 participates in Mg(2+) binding. 2 residues coordinate substrate: His158 and Glu167. The active-site Proton donor is Glu210. 3 residues coordinate Mg(2+): Asp245, Glu293, and Asp318. Substrate-binding positions include Glu293, Asp318, 370-373 (SHRS), and Lys394.

It belongs to the enolase family. Homodimer. Requires Mg(2+) as cofactor.

It localises to the cytoplasm. It catalyses the reaction (2R)-2-phosphoglycerate = phosphoenolpyruvate + H2O. Its pathway is carbohydrate degradation; glycolysis; pyruvate from D-glyceraldehyde 3-phosphate: step 4/5. In Trachemys scripta elegans (Red-eared slider turtle), this protein is Alpha-enolase.